A 599-amino-acid polypeptide reads, in one-letter code: 2-succinyl-5-enolpyruvyl-6-hydroxy-3-cyclohexene-1-carboxylate synthase (599 aa).

A compositionally biased stretch (low complexity) spans 1-21; that stretch reads MTSENPLDPNNAYAAADDAPL. The interval 1-35 is disordered; sequence MTSENPLDPNNAYAAADDAPLSEGDPTGAPADSGS.

Belongs to the TPP enzyme family. MenD subfamily. In terms of assembly, homodimer. The cofactor is Mg(2+). Mn(2+) is required as a cofactor. Requires thiamine diphosphate as cofactor.

The enzyme catalyses isochorismate + 2-oxoglutarate + H(+) = 5-enolpyruvoyl-6-hydroxy-2-succinyl-cyclohex-3-ene-1-carboxylate + CO2. It functions in the pathway quinol/quinone metabolism; 1,4-dihydroxy-2-naphthoate biosynthesis; 1,4-dihydroxy-2-naphthoate from chorismate: step 2/7. It participates in quinol/quinone metabolism; menaquinone biosynthesis. In terms of biological role, catalyzes the thiamine diphosphate-dependent decarboxylation of 2-oxoglutarate and the subsequent addition of the resulting succinic semialdehyde-thiamine pyrophosphate anion to isochorismate to yield 2-succinyl-5-enolpyruvyl-6-hydroxy-3-cyclohexene-1-carboxylate (SEPHCHC). The polypeptide is 2-succinyl-5-enolpyruvyl-6-hydroxy-3-cyclohexene-1-carboxylate synthase (Arthrobacter sp. (strain FB24)).